Here is a 337-residue protein sequence, read N- to C-terminus: Anthranilate phosphoribosyltransferase (337 aa).

5-phospho-alpha-D-ribose 1-diphosphate is bound by residues G80, 83–84, T88, 90–93, 108–116, and S120; these read GD, NIST, and KHGNRSVSS. G80 is a binding site for anthranilate. Mg(2+) is bound at residue S92. N111 provides a ligand contact to anthranilate. Residue R166 coordinates anthranilate. Mg(2+) is bound by residues D225 and E226.

It belongs to the anthranilate phosphoribosyltransferase family. As to quaternary structure, homodimer. Mg(2+) is required as a cofactor.

It carries out the reaction N-(5-phospho-beta-D-ribosyl)anthranilate + diphosphate = 5-phospho-alpha-D-ribose 1-diphosphate + anthranilate. The protein operates within amino-acid biosynthesis; L-tryptophan biosynthesis; L-tryptophan from chorismate: step 2/5. In terms of biological role, catalyzes the transfer of the phosphoribosyl group of 5-phosphorylribose-1-pyrophosphate (PRPP) to anthranilate to yield N-(5'-phosphoribosyl)-anthranilate (PRA). The polypeptide is Anthranilate phosphoribosyltransferase (Syntrophobacter fumaroxidans (strain DSM 10017 / MPOB)).